Reading from the N-terminus, the 72-residue chain is UPF0337 protein bsl2407 (72 aa).

The segment at 1–55 is disordered; sequence MGSTTDKIKGNANEAIGKAKQGIGEATGSDRLKGEGVVQEVKGKGQQAMGDAKDA. Over residues 35 to 47 the composition is skewed to low complexity; that stretch reads EGVVQEVKGKGQQ.

Belongs to the UPF0337 (CsbD) family.

The sequence is that of UPF0337 protein bsl2407 from Bradyrhizobium diazoefficiens (strain JCM 10833 / BCRC 13528 / IAM 13628 / NBRC 14792 / USDA 110).